The sequence spans 149 residues: Ribonuclease P protein component (149 aa).

Residues 123 to 149 (GTKVSRRSNGALHDAAPSSQPDPTVSG) are disordered. The span at 139–149 (PSSQPDPTVSG) shows a compositional bias: polar residues.

The protein belongs to the RnpA family. In terms of assembly, consists of a catalytic RNA component (M1 or rnpB) and a protein subunit.

It catalyses the reaction Endonucleolytic cleavage of RNA, removing 5'-extranucleotides from tRNA precursor.. Functionally, RNaseP catalyzes the removal of the 5'-leader sequence from pre-tRNA to produce the mature 5'-terminus. It can also cleave other RNA substrates such as 4.5S RNA. The protein component plays an auxiliary but essential role in vivo by binding to the 5'-leader sequence and broadening the substrate specificity of the ribozyme. The sequence is that of Ribonuclease P protein component from Caulobacter vibrioides (strain ATCC 19089 / CIP 103742 / CB 15) (Caulobacter crescentus).